The primary structure comprises 416 residues: D-amino acid dehydrogenase (416 aa).

3–17 (ITILGSGVIGVTTAY) provides a ligand contact to FAD.

It belongs to the DadA oxidoreductase family. FAD is required as a cofactor.

It catalyses the reaction a D-alpha-amino acid + A + H2O = a 2-oxocarboxylate + AH2 + NH4(+). It functions in the pathway amino-acid degradation; D-alanine degradation; NH(3) and pyruvate from D-alanine: step 1/1. Its function is as follows. Oxidative deamination of D-amino acids. This is D-amino acid dehydrogenase from Brucella canis (strain ATCC 23365 / NCTC 10854 / RM-666).